We begin with the raw amino-acid sequence, 123 residues long: Acidic phospholipase A2 (123 aa).

Disulfide bonds link Cys-26-Cys-116, Cys-28-Cys-44, Cys-43-Cys-95, Cys-49-Cys-123, Cys-50-Cys-88, Cys-57-Cys-81, and Cys-75-Cys-86. Residues Tyr-27, Gly-29, and Gly-31 each coordinate Ca(2+). Residue His-47 is part of the active site. Asp-48 is a binding site for Ca(2+). Asp-89 is an active-site residue.

The protein belongs to the phospholipase A2 family. Group II subfamily. D49 sub-subfamily. Homodimer. Requires Ca(2+) as cofactor. Expressed by the venom gland.

It localises to the secreted. The catalysed reaction is a 1,2-diacyl-sn-glycero-3-phosphocholine + H2O = a 1-acyl-sn-glycero-3-phosphocholine + a fatty acid + H(+). Functionally, snake venom phospholipase A2 (PLA2) that inhibits ADP-induced platelet aggregation. PLA2 catalyzes the calcium-dependent hydrolysis of the 2-acyl groups in 3-sn-phosphoglycerides. This Deinagkistrodon acutus (Hundred-pace snake) protein is Acidic phospholipase A2.